The following is a 638-amino-acid chain: Plasma kallikrein (638 aa).

Residues 1–19 (MILFNRVGYFVSLFATVSC) form the signal peptide. 4 Apple domains span residues 21–104 (CMTQ…LKQC), 111–194 (CHRD…LKSC), 201–284 (CPMD…LLTC), and 292–375 (CHSK…LRLC). 18 cysteine pairs are disulfide-bonded: Cys-21–Cys-104, Cys-47–Cys-77, Cys-51–Cys-57, Cys-111–Cys-194, Cys-137–Cys-166, Cys-141–Cys-147, Cys-201–Cys-284, Cys-227–Cys-256, Cys-231–Cys-237, Cys-292–Cys-375, Cys-318–Cys-347, Cys-322–Cys-328, Cys-340–Cys-345, Cys-383–Cys-503, Cys-419–Cys-435, Cys-517–Cys-584, Cys-548–Cys-563, and Cys-574–Cys-602. A glycan (N-linked (GlcNAc...) asparagine) is linked at Asn-127. Asn-215 carries an N-linked (GlcNAc...) asparagine glycan. An N-linked (GlcNAc...) asparagine glycan is attached at Asn-308. The Peptidase S1 domain maps to 391–626 (IVGGTNASLG…YMDWILEKTQ (236 aa)). The N-linked (GlcNAc...) asparagine glycan is linked to Asn-396. Active-site charge relay system residues include His-434 and Asp-483. Asn-494 carries an N-linked (GlcNAc...) asparagine glycan. Ser-578 serves as the catalytic Charge relay system.

It belongs to the peptidase S1 family. Plasma kallikrein subfamily. In terms of assembly, forms a heterodimer with SERPINA5. The zymogen is activated by factor XIIa, which cleaves the molecule into a light chain, which contains the active site, and a heavy chain, which associates with HMW kininogen. These chains are linked by one or more disulfide bonds.

The protein localises to the secreted. It carries out the reaction Cleaves selectively Arg-|-Xaa and Lys-|-Xaa bonds, including Lys-|-Arg and Arg-|-Ser bonds in (human) kininogen to release bradykinin.. Its activity is regulated as follows. Inhibited by SERPINA5. The enzyme cleaves Lys-Arg and Arg-Ser bonds. It activates, in a reciprocal reaction, factor XII after its binding to a negatively charged surface. It also releases bradykinin from HMW kininogen and may also play a role in the renin-angiotensin system by converting prorenin into renin. In Mus musculus (Mouse), this protein is Plasma kallikrein (Klkb1).